The chain runs to 296 residues: uncharacterized protein (296 aa).

Residues 1 to 57 constitute a chloroplast transit peptide; the sequence is MTSFLSFSAISAHPPTFSGASFRPRSFSPRLFKSCVKCTYAEAGLSSASWSAPIDIV.

This sequence belongs to the NAD(P)-dependent epimerase/dehydratase family.

It localises to the plastid. Its subcellular location is the chloroplast. It is found in the plastoglobule. This is an uncharacterized protein from Arabidopsis thaliana (Mouse-ear cress).